The sequence spans 71 residues: Beta-defensin 25 (71 aa).

Residues 1–22 form the signal peptide; sequence MAKWILLIVALLVLGHVPSGST. Intrachain disulfides connect Cys27/Cys54, Cys34/Cys48, and Cys38/Cys55.

The protein belongs to the beta-defensin family.

It is found in the secreted. Functionally, has antibacterial activity. The sequence is that of Beta-defensin 25 (Defb25) from Rattus norvegicus (Rat).